The chain runs to 318 residues: Protein phosphatase 1 regulatory subunit 3C (318 aa).

Residues 84–87 carry the PP1-binding motif motif; sequence RVVF. An interaction with EPM2A region spans residues 141–263; sequence PSADYLSFRN…YRIVHVQWKP (123 aa). Positions 149–257 constitute a CBM21 domain; it reads RNHFQKNSVC…NNEGQNYRIV (109 aa).

In terms of assembly, interacts with PPP1CC catalytic subunit of PP1 and associates with glycogen. Forms complexes with glycogen phosphorylase, glycogen synthase and phosphorylase kinase which is necessary for its regulation of PP1 activity. Also interacts with EPM2A/laforin. Ubiquitinated by NHLRC1/malin in a EPM2A/laforin-dependent manner.

Its function is as follows. Acts as a glycogen-targeting subunit for PP1 and regulates its activity. Activates glycogen synthase, reduces glycogen phosphorylase activity and limits glycogen breakdown. Dramatically increases basal and insulin-stimulated glycogen synthesis upon overexpression in a variety of cell types. The protein is Protein phosphatase 1 regulatory subunit 3C of Bos taurus (Bovine).